A 168-amino-acid polypeptide reads, in one-letter code: Large ribosomal subunit protein uL10 (168 aa).

This sequence belongs to the universal ribosomal protein uL10 family. In terms of assembly, part of the ribosomal stalk of the 50S ribosomal subunit. The N-terminus interacts with L11 and the large rRNA to form the base of the stalk. The C-terminus forms an elongated spine to which L12 dimers bind in a sequential fashion forming a multimeric L10(L12)X complex.

Functionally, forms part of the ribosomal stalk, playing a central role in the interaction of the ribosome with GTP-bound translation factors. This is Large ribosomal subunit protein uL10 from Acinetobacter baumannii (strain AB307-0294).